Here is a 543-residue protein sequence, read N- to C-terminus: CTP synthase (543 aa).

Residues 1-267 (MKQTKYIFVT…LSPIAEILDL (267 aa)) are amidoligase domain. Serine 15 is a CTP binding site. Serine 15 contacts UTP. Residues 16–21 (SLGKGI) and aspartate 73 contribute to the ATP site. Aspartate 73 and glutamate 141 together coordinate Mg(2+). CTP-binding positions include 148–150 (DIE), 188–193 (KTKPTQ), and lysine 224. Residues 188–193 (KTKPTQ) and lysine 224 each bind UTP. One can recognise a Glutamine amidotransferase type-1 domain in the interval 292–543 (KIAFVGKYVD…IKAAINYEDN (252 aa)). Glycine 354 contacts L-glutamine. Residue cysteine 381 is the Nucleophile; for glutamine hydrolysis of the active site. Residues 382–385 (LGMQ), glutamate 405, and arginine 473 contribute to the L-glutamine site. Active-site residues include histidine 516 and glutamate 518.

It belongs to the CTP synthase family. In terms of assembly, homotetramer.

The catalysed reaction is UTP + L-glutamine + ATP + H2O = CTP + L-glutamate + ADP + phosphate + 2 H(+). It carries out the reaction L-glutamine + H2O = L-glutamate + NH4(+). It catalyses the reaction UTP + NH4(+) + ATP = CTP + ADP + phosphate + 2 H(+). The protein operates within pyrimidine metabolism; CTP biosynthesis via de novo pathway; CTP from UDP: step 2/2. With respect to regulation, allosterically activated by GTP, when glutamine is the substrate; GTP has no effect on the reaction when ammonia is the substrate. The allosteric effector GTP functions by stabilizing the protein conformation that binds the tetrahedral intermediate(s) formed during glutamine hydrolysis. Inhibited by the product CTP, via allosteric rather than competitive inhibition. Catalyzes the ATP-dependent amination of UTP to CTP with either L-glutamine or ammonia as the source of nitrogen. Regulates intracellular CTP levels through interactions with the four ribonucleotide triphosphates. This chain is CTP synthase, found in Campylobacter jejuni subsp. jejuni serotype O:2 (strain ATCC 700819 / NCTC 11168).